Reading from the N-terminus, the 418-residue chain is Tyrosine--tRNA ligase (418 aa).

Residue tyrosine 34 participates in L-tyrosine binding. Positions 39 to 48 (PTADSLHLGH) match the 'HIGH' region motif. Tyrosine 169 and glutamine 173 together coordinate L-tyrosine. The 'KMSKS' region motif lies at 229 to 233 (KFGKS). Residue lysine 232 participates in ATP binding. Residues 352 to 418 (NNIVELLVSS…GKKKYFVLTY (67 aa)) form the S4 RNA-binding domain.

This sequence belongs to the class-I aminoacyl-tRNA synthetase family. TyrS type 1 subfamily. Homodimer.

Its subcellular location is the cytoplasm. The catalysed reaction is tRNA(Tyr) + L-tyrosine + ATP = L-tyrosyl-tRNA(Tyr) + AMP + diphosphate + H(+). Functionally, catalyzes the attachment of tyrosine to tRNA(Tyr) in a two-step reaction: tyrosine is first activated by ATP to form Tyr-AMP and then transferred to the acceptor end of tRNA(Tyr). In Streptococcus pneumoniae (strain 70585), this protein is Tyrosine--tRNA ligase.